Consider the following 274-residue polypeptide: Remorin 4.2 (274 aa).

Positions 1–30 (MLTLYHQERSPDATSNDRDETPETVVREVH) are enriched in basic and acidic residues. Disordered regions lie at residues 1-71 (MLTL…EGEN), 117-157 (TDHE…TVQR), and 218-245 (AMEK…AKRG). 2 stretches are compositionally biased toward polar residues: residues 61 to 71 (RSATTMSEGEN) and 145 to 156 (GPGQSRVGSTVQ). A coiled-coil region spans residues 204 to 239 (MKKIERKLEERKAKAMEKTQNNVAKAQRKAEERRAT). Residues 231–245 (RKAEERRATAEAKRG) are compositionally biased toward basic and acidic residues.

The protein belongs to the remorin family. As to quaternary structure, forms homodimer and heterodimer with REM4.1. Interacts with KIN11. Post-translationally, probably ubiquitinated and degraded by the 26S proteasome pathway. Predominantly detected in bud, stem, root, flower, silique, and leaves, and enhanced dramatically in senescence leaf.

The protein resides in the cell membrane. Functionally, collaborates with REM4.1 to positively regulate the BCTV and BSCTV susceptibility. The polypeptide is Remorin 4.2 (Arabidopsis thaliana (Mouse-ear cress)).